The chain runs to 182 residues: MEIKFTIKQVVAVGIGAALFVVIGMINIPTPVPNTSIQLQYAVQALLSIIFGPIIGLLVGVIGHAIKDSLAGYGLWWTWIIASGLFGLVVGLFRKYVRVINGVFDWKDILIFNLIQLLANALVWGVLAPLGDVVIYQEAAEKVFAQGIVAGIANGVSVAIAGTLLLLAYAGTQTRAGSLKKD.

5 consecutive transmembrane segments (helical) span residues 10-30 (VVAV…NIPT), 46-66 (LLSI…GHAI), 73-93 (YGLW…VGLF), 109-129 (ILIF…VLAP), and 148-168 (IVAG…LLLA).

This sequence belongs to the UPF0397 family.

The protein localises to the cell membrane. This is UPF0397 protein SPH_0594 from Streptococcus pneumoniae (strain Hungary19A-6).